A 515-amino-acid chain; its full sequence is Fatty acyl-CoA reductase 1 (515 aa).

The Cytoplasmic portion of the chain corresponds to 1–465 (MVSIPEYYEG…ARKHLNKLRN (465 aa)). The tract at residues 451 to 507 (SGLPAARKHLNKLRNIRYGFNTILVILIWRIFIARSQMARNIWYFVVSLCYKFLSYF) is necessary and sufficient for PEX19-mediated localization into peroxisome membrane. Residues 466 to 483 (IRYGFNTILVILIWRIFI) form a helical membrane-spanning segment. At 484–515 (ARSQMARNIWYFVVSLCYKFLSYFRASSTMRY) the chain is on the peroxisomal side.

Belongs to the fatty acyl-CoA reductase family. In terms of assembly, interacts with PEX19; PEX19 mediates the targeting of FAR1 to peroxisomes.

Its subcellular location is the peroxisome membrane. The enzyme catalyses a long-chain fatty acyl-CoA + 2 NADPH + 2 H(+) = a long-chain primary fatty alcohol + 2 NADP(+) + CoA. It catalyses the reaction hexadecanoyl-CoA + 2 NADPH + 2 H(+) = hexadecan-1-ol + 2 NADP(+) + CoA. The catalysed reaction is octadecanoyl-CoA + 2 NADPH + 2 H(+) = octadecan-1-ol + 2 NADP(+) + CoA. It carries out the reaction (9Z)-octadecenoyl-CoA + 2 NADPH + 2 H(+) = (9Z)-octadecen-1-ol + 2 NADP(+) + CoA. The enzyme catalyses (9Z,12Z)-octadecadienoyl-CoA + 2 NADPH + 2 H(+) = (9Z,12Z)-octadecadien-1-ol + 2 NADP(+) + CoA. It catalyses the reaction eicosanoyl-CoA + 2 NADPH + 2 H(+) = eicosan-1-ol + 2 NADP(+) + CoA. The catalysed reaction is 16-methylheptadecanoyl-CoA + 2 NADPH + 2 H(+) = 16-methylheptadecan-1-ol + 2 NADP(+) + CoA. It carries out the reaction 18-methylnonadecanoyl-CoA + 2 NADPH + 2 H(+) = 18-methylnonadecan-1-ol + 2 NADP(+) + CoA. Its function is as follows. Catalyzes the reduction of saturated and unsaturated C16 or C18 fatty acyl-CoA to fatty alcohols. It plays an essential role in the production of ether lipids/plasmalogens which synthesis requires fatty alcohols. In parallel, it is also required for wax monoesters production since fatty alcohols also constitute a substrate for their synthesis. Catalyzes the reduction of saturated and unsaturated C16 or C18 fatty acyl-CoA to fatty alcohols. It plays an essential role in the production of ether lipids/plasmalogens which synthesis requires fatty alcohols. In parallel, it is also required for wax monoesters production since fatty alcohols also constitute a substrate for their synthesis. This chain is Fatty acyl-CoA reductase 1, found in Rattus norvegicus (Rat).